The sequence spans 341 residues: Very-long-chain 3-oxoacyl-CoA reductase (341 aa).

Residues 22 to 42 form a helical membrane-spanning segment; it reads AIYGFLLAGVAAFAAPIVSTI. Residues leucine 67, aspartate 123, aspartate 131, asparagine 150, tyrosine 217, lysine 221, isoleucine 250, and threonine 252 each contribute to the NADP(+) site. The Proton donor role is filled by tyrosine 217. Lysine 221 functions as the Lowers pKa of active site Tyr in the catalytic mechanism.

The protein belongs to the short-chain dehydrogenases/reductases (SDR) family.

It localises to the endoplasmic reticulum membrane. The catalysed reaction is a very-long-chain (3R)-3-hydroxyacyl-CoA + NADP(+) = a very-long-chain 3-oxoacyl-CoA + NADPH + H(+). Its pathway is lipid metabolism; fatty acid biosynthesis. Its function is as follows. Component of the microsomal membrane bound fatty acid elongation system, which produces the 26-carbon very long-chain fatty acids (VLCFA) from palmitate. Catalyzes the reduction of the 3-ketoacyl-CoA intermediate that is formed in each cycle of fatty acid elongation. VLCFAs serve as precursors for ceramide and sphingolipids. In Phaeosphaeria nodorum (strain SN15 / ATCC MYA-4574 / FGSC 10173) (Glume blotch fungus), this protein is Very-long-chain 3-oxoacyl-CoA reductase.